Reading from the N-terminus, the 290-residue chain is Enoyl-CoA hydratase, mitochondrial (290 aa).

The transit peptide at 1-27 directs the protein to the mitochondrion; it reads MATLRVLLSCVRGPLRPPVRCPAWRPF. Thr46 carries the post-translational modification Phosphothreonine. 98-101 provides a ligand contact to substrate; sequence ADIK. Lys101 is subject to N6-acetyllysine; alternate. Residue Lys101 is modified to N6-succinyllysine; alternate. A Phosphoserine modification is found at Ser114. Lys115 carries the post-translational modification N6-acetyllysine; alternate. The residue at position 115 (Lys115) is an N6-succinyllysine; alternate. Lys118 carries the post-translational modification N6-acetyllysine. Gly141 serves as a coordination point for substrate. Lys204 carries the post-translational modification N6-succinyllysine. Lys211 bears the N6-acetyllysine mark.

It belongs to the enoyl-CoA hydratase/isomerase family. Homohexamer; dimer of trimers.

It is found in the mitochondrion matrix. It catalyses the reaction a (3S)-3-hydroxyacyl-CoA = a (2E)-enoyl-CoA + H2O. The catalysed reaction is a (3E)-enoyl-CoA = a 4-saturated (2E)-enoyl-CoA. It carries out the reaction (3E)-hexenoyl-CoA = (2E)-hexenoyl-CoA. The enzyme catalyses (3S)-3-hydroxybutanoyl-CoA = (2E)-butenoyl-CoA + H2O. It catalyses the reaction 3-hydroxyisovaleryl-CoA = 3-methylbut-2-enoyl-CoA + H2O. The catalysed reaction is 3-hydroxypropanoyl-CoA = acryloyl-CoA + H2O. It carries out the reaction 3-hydroxybutanoyl-CoA = (2E)-butenoyl-CoA + H2O. The enzyme catalyses 2-methylpropenoyl-CoA + H2O = (S)-3-hydroxyisobutanoyl-CoA. It catalyses the reaction (3S)-hydroxyhexanoyl-CoA = (2E)-hexenoyl-CoA + H2O. The catalysed reaction is (3S)-hydroxydecanoyl-CoA = (2E)-decenoyl-CoA + H2O. The protein operates within lipid metabolism; fatty acid beta-oxidation. In terms of biological role, converts unsaturated trans-2-enoyl-CoA species ((2E)-enoyl-CoA) to the corresponding (3S)-3-hydroxyacyl-CoA species through addition of a water molecule to the double bond. Catalyzes the hydration of medium- and short-chained fatty enoyl-CoA thioesters from 4 carbons long (C4) up to C16. Has high substrate specificity for crotonyl-CoA ((2E)-butenoyl-CoA) and moderate specificity for acryloyl-CoA, 3-methylcrotonyl-CoA (3-methyl-(2E)-butenoyl-CoA) and methacrylyl-CoA ((2E)-2-methylpropenoyl-CoA). Can bind tiglyl-CoA (2-methylcrotonoyl-CoA), but hydrates only a small amount of this substrate. Plays a key role in the beta-oxidation spiral of short- and medium-chain fatty acid oxidation. At a lower rate than the hydratase reaction, catalyzes the isomerase reaction of trans-3-enoyl-CoA species (such as (3E)-hexenoyl-CoA) to trans-2-enoyl-CoA species (such as (2E)-hexenoyl-CoA), which are subsequently hydrated to 3(S)-3-hydroxyacyl-CoA species (such as (3S)-hydroxyhexanoyl-CoA). The sequence is that of Enoyl-CoA hydratase, mitochondrial (ECHS1) from Pongo abelii (Sumatran orangutan).